Here is a 153-residue protein sequence, read N- to C-terminus: 3-hydroxyacyl-[acyl-carrier-protein] dehydratase FabZ (153 aa).

The active site involves H54.

Belongs to the thioester dehydratase family. FabZ subfamily.

The protein localises to the cytoplasm. The enzyme catalyses a (3R)-hydroxyacyl-[ACP] = a (2E)-enoyl-[ACP] + H2O. Its function is as follows. Involved in unsaturated fatty acids biosynthesis. Catalyzes the dehydration of short chain beta-hydroxyacyl-ACPs and long chain saturated and unsaturated beta-hydroxyacyl-ACPs. The protein is 3-hydroxyacyl-[acyl-carrier-protein] dehydratase FabZ of Chlamydia muridarum (strain MoPn / Nigg).